A 362-amino-acid chain; its full sequence is NAD(P)H-quinone oxidoreductase subunit 1, chloroplastic (362 aa).

The next 8 helical transmembrane spans lie at 31–51, 99–119, 132–152, 178–198, 206–226, 268–288, 303–323, and 336–356; these read WVPLPILSLVIVATLGVLVIV, WLFTLGPAVVVIPIFLAYLVV, IGIFFWIAISSIAPIGLLMSG, LAICVLSVCLLADSLSTVDIV, ILTWNIWRQPIGFVAFLIAAL, LVSGCFVTVLYLGGWHGPFAI, AFLGITWTLLKTFLFLFAAIL, and LLDLGWKFLLPVSLGNLLLTA.

The protein belongs to the complex I subunit 1 family. In terms of assembly, NDH is composed of at least 16 different subunits, 5 of which are encoded in the nucleus.

It localises to the plastid. Its subcellular location is the chloroplast thylakoid membrane. It carries out the reaction a plastoquinone + NADH + (n+1) H(+)(in) = a plastoquinol + NAD(+) + n H(+)(out). The enzyme catalyses a plastoquinone + NADPH + (n+1) H(+)(in) = a plastoquinol + NADP(+) + n H(+)(out). NDH shuttles electrons from NAD(P)H:plastoquinone, via FMN and iron-sulfur (Fe-S) centers, to quinones in the photosynthetic chain and possibly in a chloroplast respiratory chain. The immediate electron acceptor for the enzyme in this species is believed to be plastoquinone. Couples the redox reaction to proton translocation, and thus conserves the redox energy in a proton gradient. In Nephroselmis olivacea (Green alga), this protein is NAD(P)H-quinone oxidoreductase subunit 1, chloroplastic.